The primary structure comprises 65 residues: Translational regulator CsrA (65 aa).

It belongs to the CsrA/RsmA family. In terms of assembly, homodimer; the beta-strands of each monomer intercalate to form a hydrophobic core, while the alpha-helices form wings that extend away from the core.

Its subcellular location is the cytoplasm. Functionally, a key translational regulator that binds mRNA to regulate translation initiation and/or mRNA stability. Mediates global changes in gene expression, shifting from rapid growth to stress survival by linking envelope stress, the stringent response and the catabolite repression systems. Usually binds in the 5'-UTR; binding at or near the Shine-Dalgarno sequence prevents ribosome-binding, repressing translation, binding elsewhere in the 5'-UTR can activate translation and/or stabilize the mRNA. Its function is antagonized by small RNA(s). The sequence is that of Translational regulator CsrA from Pseudomonas putida (strain ATCC 47054 / DSM 6125 / CFBP 8728 / NCIMB 11950 / KT2440).